The primary structure comprises 102 residues: Small ribosomal subunit protein uS14 (102 aa).

Belongs to the universal ribosomal protein uS14 family. Part of the 30S ribosomal subunit. Contacts proteins S3 and S10.

Functionally, binds 16S rRNA, required for the assembly of 30S particles and may also be responsible for determining the conformation of the 16S rRNA at the A site. The protein is Small ribosomal subunit protein uS14 of Dichelobacter nodosus (strain VCS1703A).